We begin with the raw amino-acid sequence, 131 residues long: Profilin (131 aa).

It belongs to the profilin family. In terms of assembly, occurs in many kinds of cells as a complex with monomeric actin in a 1:1 ratio.

Its subcellular location is the cytoplasm. The protein localises to the cytoskeleton. In terms of biological role, binds to actin and affects the structure of the cytoskeleton. At high concentrations, profilin prevents the polymerization of actin, whereas it enhances it at low concentrations. Has a high affinity for poly-proline. This chain is Profilin, found in Citrullus lanatus (Watermelon).